Consider the following 137-residue polypeptide: Large ribosomal subunit protein uL16 (137 aa).

It belongs to the universal ribosomal protein uL16 family. Part of the 50S ribosomal subunit.

Binds 23S rRNA and is also seen to make contacts with the A and possibly P site tRNAs. This Sorangium cellulosum (strain So ce56) (Polyangium cellulosum (strain So ce56)) protein is Large ribosomal subunit protein uL16.